A 248-amino-acid chain; its full sequence is 4-hydroxy-tetrahydrodipicolinate reductase (248 aa).

Residues Gly-8–Met-13, Gly-75–Thr-77, and Ala-99–Met-102 contribute to the NAD(+) site. The active-site Proton donor/acceptor is His-131. His-132 serves as a coordination point for (S)-2,3,4,5-tetrahydrodipicolinate. The active-site Proton donor is Lys-135. Residue Gly-141–Thr-142 participates in (S)-2,3,4,5-tetrahydrodipicolinate binding.

The protein belongs to the DapB family.

It localises to the cytoplasm. It carries out the reaction (S)-2,3,4,5-tetrahydrodipicolinate + NAD(+) + H2O = (2S,4S)-4-hydroxy-2,3,4,5-tetrahydrodipicolinate + NADH + H(+). The catalysed reaction is (S)-2,3,4,5-tetrahydrodipicolinate + NADP(+) + H2O = (2S,4S)-4-hydroxy-2,3,4,5-tetrahydrodipicolinate + NADPH + H(+). The protein operates within amino-acid biosynthesis; L-lysine biosynthesis via DAP pathway; (S)-tetrahydrodipicolinate from L-aspartate: step 4/4. In terms of biological role, catalyzes the conversion of 4-hydroxy-tetrahydrodipicolinate (HTPA) to tetrahydrodipicolinate. The sequence is that of 4-hydroxy-tetrahydrodipicolinate reductase from Campylobacter jejuni subsp. doylei (strain ATCC BAA-1458 / RM4099 / 269.97).